We begin with the raw amino-acid sequence, 207 residues long: Thaumatin-like protein 1 (207 aa).

8 cysteine pairs are disulfide-bonded: C9–C202, C50–C60, C65–C71, C117–C191, C122–C174, C130–C140, C144–C153, and C154–C161.

Belongs to the thaumatin family. As to quaternary structure, monomer. Post-translationally, not glycosylated.

The protein resides in the secreted. In terms of biological role, acidic thaumatin-like protein. Exhibits weak beta-1,3-glucanase activity with laminarin as substrate. In Manilkara zapota (Sapodilla plum), this protein is Thaumatin-like protein 1 (TLP1).